The following is a 506-amino-acid chain: ATP synthase subunit alpha (506 aa).

Positions 119-129 (GPIEYEGKRPI) are enriched in basic and acidic residues. Residues 119–138 (GPIEYEGKRPIESPAPPIVR) are disordered. Position 169–176 (169–176 (GDRQTGKT)) interacts with ATP.

Belongs to the ATPase alpha/beta chains family. In terms of assembly, F-type ATPases have 2 components, CF(1) - the catalytic core - and CF(0) - the membrane proton channel. CF(1) has five subunits: alpha(3), beta(3), gamma(1), delta(1), epsilon(1). CF(0) has three main subunits: a(1), b(2) and c(9-12). The alpha and beta chains form an alternating ring which encloses part of the gamma chain. CF(1) is attached to CF(0) by a central stalk formed by the gamma and epsilon chains, while a peripheral stalk is formed by the delta and b chains.

It localises to the cell membrane. It carries out the reaction ATP + H2O + 4 H(+)(in) = ADP + phosphate + 5 H(+)(out). Functionally, produces ATP from ADP in the presence of a proton gradient across the membrane. The alpha chain is a regulatory subunit. The chain is ATP synthase subunit alpha from Caldanaerobacter subterraneus subsp. tengcongensis (strain DSM 15242 / JCM 11007 / NBRC 100824 / MB4) (Thermoanaerobacter tengcongensis).